The following is a 968-amino-acid chain: RNA polymerase-associated protein RapA (968 aa).

Residues 164–334 (DVGRRHAPRV…FARLRLLDPN (171 aa)) enclose the Helicase ATP-binding domain. 177 to 184 (DEVGLGKT) lines the ATP pocket. The short motif at 280–283 (DEAH) is the DEAH box element. Residues 490-662 (RVEWLMGYLT…YLASPDQTEG (173 aa)) enclose the Helicase C-terminal domain.

This sequence belongs to the SNF2/RAD54 helicase family. RapA subfamily. In terms of assembly, interacts with the RNAP. Has a higher affinity for the core RNAP than for the holoenzyme. Its ATPase activity is stimulated by binding to RNAP.

Functionally, transcription regulator that activates transcription by stimulating RNA polymerase (RNAP) recycling in case of stress conditions such as supercoiled DNA or high salt concentrations. Probably acts by releasing the RNAP, when it is trapped or immobilized on tightly supercoiled DNA. Does not activate transcription on linear DNA. Probably not involved in DNA repair. The polypeptide is RNA polymerase-associated protein RapA (Escherichia coli O1:K1 / APEC).